Reading from the N-terminus, the 304-residue chain is Ribosomal RNA small subunit methyltransferase H (304 aa).

S-adenosyl-L-methionine contacts are provided by residues 37–39 (GGH), Asp57, Phe79, Asp100, and His107.

This sequence belongs to the methyltransferase superfamily. RsmH family.

The protein resides in the cytoplasm. It carries out the reaction cytidine(1402) in 16S rRNA + S-adenosyl-L-methionine = N(4)-methylcytidine(1402) in 16S rRNA + S-adenosyl-L-homocysteine + H(+). Functionally, specifically methylates the N4 position of cytidine in position 1402 (C1402) of 16S rRNA. This is Ribosomal RNA small subunit methyltransferase H from Phocaeicola vulgatus (strain ATCC 8482 / DSM 1447 / JCM 5826 / CCUG 4940 / NBRC 14291 / NCTC 11154) (Bacteroides vulgatus).